The chain runs to 176 residues: MSKTAALTDIEKSKATISFWKFIAMFIQALFLIGLVEDLCYYHMFYSRQYFFLEILVTIHTGFSFIVFLIEHKPLIMLHVGYMTLLTIIPIAYMVMQGVEFGILIFDDYHILVFRDFHKFGCSIMFSLYYIGYIVVCFLFIEALEKKPVLPQVYSIKPKLVAAVNPSNNCNVYPML.

This is an uncharacterized protein from Caenorhabditis elegans.